Here is a 729-residue protein sequence, read N- to C-terminus: Hydroxamate siderophore receptor FhuE (729 aa).

Positions 1-36 (MLSTQFNRDNQYQAITKPSLLAGCIALALLPSAAFA) are cleaved as a signal peptide. The short motif at 42–49 (ETVIVEGS) is the TonB box element. Positions 48-72 (GSATAPDDGENDYSVTSTSAGTKMQ) are disordered. The segment covering 60–72 (YSVTSTSAGTKMQ) has biased composition (polar residues). The 110-residue stretch at 74 to 183 (TQRDIPQSVT…PSAAINMVRK (110 aa)) folds into the TBDR plug domain. Positions 117, 142, 275, 357, 373, and 416 each coordinate Fe(III)-coprogen. The TBDR beta-barrel domain maps to 189 to 729 (EFKGDVSAEY…NFSITGTYQF (541 aa)). A TonB C-terminal box motif is present at residues 712–729 (SIVYGTPRNFSITGTYQF).

This sequence belongs to the TonB-dependent receptor family.

The protein resides in the cell outer membrane. Functionally, involved in the active transport across the outer membrane of iron complexed with linear hydroxamate siderophores coprogen, rhodotorulic acid and ferrioxamine B. Binds Fe-coprogen with high affinity, rhodotorulic acid to a lesser extent, and weakly to ferrioxamine B. Selective for planar siderophores. Does not use cyclic siderophores ferrichrome nor ferrioxamine E as substrates. This Escherichia coli (strain K12) protein is Hydroxamate siderophore receptor FhuE.